A 640-amino-acid polypeptide reads, in one-letter code: 1,4-alpha-glucan branching enzyme GlgB (640 aa).

D318 (nucleophile) is an active-site residue. E371 serves as the catalytic Proton donor.

It belongs to the glycosyl hydrolase 13 family. GlgB subfamily. In terms of assembly, monomer.

It carries out the reaction Transfers a segment of a (1-&gt;4)-alpha-D-glucan chain to a primary hydroxy group in a similar glucan chain.. It functions in the pathway glycan biosynthesis; glycogen biosynthesis. Its function is as follows. Catalyzes the formation of the alpha-1,6-glucosidic linkages in glycogen by scission of a 1,4-alpha-linked oligosaccharide from growing alpha-1,4-glucan chains and the subsequent attachment of the oligosaccharide to the alpha-1,6 position. The protein is 1,4-alpha-glucan branching enzyme GlgB of Francisella tularensis subsp. tularensis (strain FSC 198).